Here is a 144-residue protein sequence, read N- to C-terminus: Superoxide dismutase [Mn] (144 aa).

Positions glycine 1 to phenylalanine 22 are disordered. Histidine 42, aspartate 124, and histidine 128 together coordinate Mn(2+).

This sequence belongs to the iron/manganese superoxide dismutase family. Mn(2+) is required as a cofactor.

The enzyme catalyses 2 superoxide + 2 H(+) = H2O2 + O2. Its function is as follows. Destroys superoxide anion radicals which are normally produced within the cells and which are toxic to biological systems. The protein is Superoxide dismutase [Mn] (sod) of Haloarcula hispanica.